The following is a 188-amino-acid chain: Elongation factor P (188 aa).

Residue Lys-34 is modified to N6-(3,6-diaminohexanoyl)-5-hydroxylysine.

The protein belongs to the elongation factor P family. May be beta-lysylated on the epsilon-amino group of Lys-34 by the combined action of EpmA and EpmB, and then hydroxylated on the C5 position of the same residue by EpmC (if this protein is present). Lysylation is critical for the stimulatory effect of EF-P on peptide-bond formation. The lysylation moiety may extend toward the peptidyltransferase center and stabilize the terminal 3-CCA end of the tRNA. Hydroxylation of the C5 position on Lys-34 may allow additional potential stabilizing hydrogen-bond interactions with the P-tRNA.

It is found in the cytoplasm. The protein operates within protein biosynthesis; polypeptide chain elongation. Its function is as follows. Involved in peptide bond synthesis. Alleviates ribosome stalling that occurs when 3 or more consecutive Pro residues or the sequence PPG is present in a protein, possibly by augmenting the peptidyl transferase activity of the ribosome. Modification of Lys-34 is required for alleviation. This Coxiella burnetii (strain CbuK_Q154) (Coxiella burnetii (strain Q154)) protein is Elongation factor P.